The following is a 305-amino-acid chain: UDP-3-O-acyl-N-acetylglucosamine deacetylase (305 aa).

H78, H237, and D241 together coordinate Zn(2+). The active-site Proton donor is the H264.

The protein belongs to the LpxC family. Zn(2+) is required as a cofactor.

The catalysed reaction is a UDP-3-O-[(3R)-3-hydroxyacyl]-N-acetyl-alpha-D-glucosamine + H2O = a UDP-3-O-[(3R)-3-hydroxyacyl]-alpha-D-glucosamine + acetate. Its pathway is glycolipid biosynthesis; lipid IV(A) biosynthesis; lipid IV(A) from (3R)-3-hydroxytetradecanoyl-[acyl-carrier-protein] and UDP-N-acetyl-alpha-D-glucosamine: step 2/6. Its function is as follows. Catalyzes the hydrolysis of UDP-3-O-myristoyl-N-acetylglucosamine to form UDP-3-O-myristoylglucosamine and acetate, the committed step in lipid A biosynthesis. The chain is UDP-3-O-acyl-N-acetylglucosamine deacetylase from Burkholderia multivorans (strain ATCC 17616 / 249).